Consider the following 121-residue polypeptide: Ribonuclease P protein component (121 aa).

The protein belongs to the RnpA family. As to quaternary structure, consists of a catalytic RNA component (M1 or rnpB) and a protein subunit.

It carries out the reaction Endonucleolytic cleavage of RNA, removing 5'-extranucleotides from tRNA precursor.. In terms of biological role, RNaseP catalyzes the removal of the 5'-leader sequence from pre-tRNA to produce the mature 5'-terminus. It can also cleave other RNA substrates such as 4.5S RNA. The protein component plays an auxiliary but essential role in vivo by binding to the 5'-leader sequence and broadening the substrate specificity of the ribozyme. The sequence is that of Ribonuclease P protein component from Bifidobacterium adolescentis (strain ATCC 15703 / DSM 20083 / NCTC 11814 / E194a).